A 103-amino-acid chain; its full sequence is Cell division protein FtsB (103 aa).

Residues 1 to 3 (MGK) are Cytoplasmic-facing. The chain crosses the membrane as a helical span at residues 4 to 21 (LTLLLLALLVWLQYSLWF). The Periplasmic segment spans residues 22–103 (GKNGIHDYSR…RAATAGQTHR (82 aa)). Positions 33–62 (NDDVVAQQATNAKLKARNDQLFAEIDDLNG) form a coiled coil.

The protein belongs to the FtsB family. As to quaternary structure, part of a complex composed of FtsB, FtsL and FtsQ.

Its subcellular location is the cell inner membrane. Its function is as follows. Essential cell division protein. May link together the upstream cell division proteins, which are predominantly cytoplasmic, with the downstream cell division proteins, which are predominantly periplasmic. The sequence is that of Cell division protein FtsB from Salmonella agona (strain SL483).